Reading from the N-terminus, the 684-residue chain is Extracellular lipase (684 aa).

The signal sequence occupies residues 1-48 (MKKKLIYAAVVSALLAGCGGSDDNKGDTSSYLDYLLTGSNAVGPSALA). Disordered stretches follow at residues 321–405 (SIPV…ADWG) and 462–493 (QRER…GDRS). Over residues 385–405 (ADCRSDPPERAAGRGEQADWG) the composition is skewed to basic and acidic residues. The active-site Nucleophile is Ser-568.

This sequence belongs to the AB hydrolase superfamily. Lipase family. In terms of assembly, monomer.

It is found in the secreted. It carries out the reaction a triacylglycerol + H2O = a diacylglycerol + a fatty acid + H(+). Its function is as follows. The optimum chain lengths for the acyl moiety is C6 for ester hydrolysis and C6 and C8 for triacylglycerol hydrolysis. The polypeptide is Extracellular lipase (Aeromonas hydrophila).